The primary structure comprises 201 residues: Protein GrpE (201 aa).

It belongs to the GrpE family. As to quaternary structure, homodimer.

Its subcellular location is the cytoplasm. In terms of biological role, participates actively in the response to hyperosmotic and heat shock by preventing the aggregation of stress-denatured proteins, in association with DnaK and GrpE. It is the nucleotide exchange factor for DnaK and may function as a thermosensor. Unfolded proteins bind initially to DnaJ; upon interaction with the DnaJ-bound protein, DnaK hydrolyzes its bound ATP, resulting in the formation of a stable complex. GrpE releases ADP from DnaK; ATP binding to DnaK triggers the release of the substrate protein, thus completing the reaction cycle. Several rounds of ATP-dependent interactions between DnaJ, DnaK and GrpE are required for fully efficient folding. This is Protein GrpE from Shewanella denitrificans (strain OS217 / ATCC BAA-1090 / DSM 15013).